Here is a 407-residue protein sequence, read N- to C-terminus: Tyrosine--tRNA ligase (407 aa).

Residue Tyr35 participates in L-tyrosine binding. Residues 40-49 carry the 'HIGH' region motif; it reads PTADSLHVGH. Residues Tyr168 and Gln172 each contribute to the L-tyrosine site. Residues 228–232 carry the 'KMSKS' region motif; sequence KMGKT. Lys231 lines the ATP pocket. An S4 RNA-binding domain is found at 341 to 405; that stretch reads NLLVDLLVKC…RGKKNFNRIV (65 aa).

This sequence belongs to the class-I aminoacyl-tRNA synthetase family. TyrS type 1 subfamily. In terms of assembly, homodimer.

It is found in the cytoplasm. The catalysed reaction is tRNA(Tyr) + L-tyrosine + ATP = L-tyrosyl-tRNA(Tyr) + AMP + diphosphate + H(+). Its function is as follows. Catalyzes the attachment of tyrosine to tRNA(Tyr) in a two-step reaction: tyrosine is first activated by ATP to form Tyr-AMP and then transferred to the acceptor end of tRNA(Tyr). The chain is Tyrosine--tRNA ligase from Clostridium botulinum (strain ATCC 19397 / Type A).